The following is a 239-amino-acid chain: Uridylate kinase (239 aa).

ATP is bound at residue 12 to 15 (KLSG). Residue Gly54 coordinates UMP. Gly55 and Arg59 together coordinate ATP. UMP contacts are provided by residues Asp74 and 135–142 (TGNPYFTT). Residues Thr162, Tyr168, and Asp171 each contribute to the ATP site.

Belongs to the UMP kinase family. In terms of assembly, homohexamer.

The protein localises to the cytoplasm. The enzyme catalyses UMP + ATP = UDP + ADP. The protein operates within pyrimidine metabolism; CTP biosynthesis via de novo pathway; UDP from UMP (UMPK route): step 1/1. Its activity is regulated as follows. Inhibited by UTP. In terms of biological role, catalyzes the reversible phosphorylation of UMP to UDP. The sequence is that of Uridylate kinase from Fusobacterium nucleatum subsp. nucleatum (strain ATCC 25586 / DSM 15643 / BCRC 10681 / CIP 101130 / JCM 8532 / KCTC 2640 / LMG 13131 / VPI 4355).